The sequence spans 466 residues: Ribulose bisphosphate carboxylase large chain (466 aa).

At lysine 5 the chain carries N6,N6,N6-trimethyllysine. Positions 114 and 164 each coordinate substrate. Catalysis depends on lysine 166, which acts as the Proton acceptor. Lysine 168 is a binding site for substrate. Lysine 192, aspartate 194, and glutamate 195 together coordinate Mg(2+). Position 192 is an N6-carboxylysine (lysine 192). The active-site Proton acceptor is histidine 285. Arginine 286, histidine 318, and serine 370 together coordinate substrate.

It belongs to the RuBisCO large chain family. Type I subfamily. In terms of assembly, heterohexadecamer of 8 large chains and 8 small chains; disulfide-linked. The disulfide link is formed within the large subunit homodimers. Mg(2+) serves as cofactor. Post-translationally, the disulfide bond which can form in the large chain dimeric partners within the hexadecamer appears to be associated with oxidative stress and protein turnover.

The protein resides in the plastid. The protein localises to the chloroplast. The enzyme catalyses 2 (2R)-3-phosphoglycerate + 2 H(+) = D-ribulose 1,5-bisphosphate + CO2 + H2O. It carries out the reaction D-ribulose 1,5-bisphosphate + O2 = 2-phosphoglycolate + (2R)-3-phosphoglycerate + 2 H(+). RuBisCO catalyzes two reactions: the carboxylation of D-ribulose 1,5-bisphosphate, the primary event in carbon dioxide fixation, as well as the oxidative fragmentation of the pentose substrate in the photorespiration process. Both reactions occur simultaneously and in competition at the same active site. This Oxalis dillenii (Gray-green wood sorrel) protein is Ribulose bisphosphate carboxylase large chain.